Here is a 570-residue protein sequence, read N- to C-terminus: Proline--tRNA ligase (570 aa).

Belongs to the class-II aminoacyl-tRNA synthetase family. ProS type 1 subfamily. As to quaternary structure, homodimer.

The protein resides in the cytoplasm. The catalysed reaction is tRNA(Pro) + L-proline + ATP = L-prolyl-tRNA(Pro) + AMP + diphosphate. Its function is as follows. Catalyzes the attachment of proline to tRNA(Pro) in a two-step reaction: proline is first activated by ATP to form Pro-AMP and then transferred to the acceptor end of tRNA(Pro). As ProRS can inadvertently accommodate and process non-cognate amino acids such as alanine and cysteine, to avoid such errors it has two additional distinct editing activities against alanine. One activity is designated as 'pretransfer' editing and involves the tRNA(Pro)-independent hydrolysis of activated Ala-AMP. The other activity is designated 'posttransfer' editing and involves deacylation of mischarged Ala-tRNA(Pro). The misacylated Cys-tRNA(Pro) is not edited by ProRS. This is Proline--tRNA ligase from Shewanella sp. (strain MR-7).